The sequence spans 234 residues: Protein-toxin resistance protein KTD1 (234 aa).

At 1-47 (MQTPSENTDVKMDTLDEPSAHLIEENVALPEDTFSSHLSYVLYEIAH) the chain is on the cytoplasmic side. A helical transmembrane segment spans residues 48 to 68 (CKPIMFMIIIIVSLISLIVLF). Residues 68–75 (FHDNDGCT) form a required for resistance to killer toxin K28, a protein-toxin encoded by the M28 virus region. Over 69–76 (HDNDGCTV) the chain is Extracellular. Residues 77–97 (ILVMSLIVASMALMVVAAFTF) traverse the membrane as a helical segment. The Cytoplasmic segment spans residues 98 to 234 (GKAITEQEFM…RKQYPDADLP (137 aa)). The segment at 147–234 (FYSGKKCHEF…RKQYPDADLP (88 aa)) is required for resistance to killer toxin K28, a protein-toxin encoded by the M28 virus. Residues 168–187 (SHSDSSSNSAEDTQSPVSAG) are disordered. Over residues 177 to 187 (AEDTQSPVSAG) the composition is skewed to polar residues. K217 is covalently cross-linked (Glycyl lysine isopeptide (Lys-Gly) (interchain with G-Cter in ubiquitin)).

The protein belongs to the DUP/COS family.

The protein resides in the vacuole membrane. It localises to the golgi apparatus. The protein localises to the trans-Golgi network membrane. Its subcellular location is the endosome membrane. Functionally, confers resistance to killer toxin K28, a protein-toxin encoded by the M28 virus that uses S.cerevisiae as a host. Probably acts against K28 after endocytosis of the protein-toxin. This Saccharomyces cerevisiae (strain ATCC 204508 / S288c) (Baker's yeast) protein is Protein-toxin resistance protein KTD1.